Here is a 726-residue protein sequence, read N- to C-terminus: DNA ligase (726 aa).

NAD(+)-binding positions include aspartate 34 to aspartate 38, serine 83 to leucine 84, and glutamate 115. Lysine 117 serves as the catalytic N6-AMP-lysine intermediate. Residues arginine 138, glutamate 190, lysine 306, and lysine 330 each contribute to the NAD(+) site. Positions 424, 427, 442, and 448 each coordinate Zn(2+). One can recognise a BRCT domain in the interval serine 608 to alanine 698. The interval threonine 690–threonine 726 is disordered.

The protein belongs to the NAD-dependent DNA ligase family. LigA subfamily. Mg(2+) is required as a cofactor. Requires Mn(2+) as cofactor.

It catalyses the reaction NAD(+) + (deoxyribonucleotide)n-3'-hydroxyl + 5'-phospho-(deoxyribonucleotide)m = (deoxyribonucleotide)n+m + AMP + beta-nicotinamide D-nucleotide.. DNA ligase that catalyzes the formation of phosphodiester linkages between 5'-phosphoryl and 3'-hydroxyl groups in double-stranded DNA using NAD as a coenzyme and as the energy source for the reaction. It is essential for DNA replication and repair of damaged DNA. The protein is DNA ligase of Roseiflexus sp. (strain RS-1).